The chain runs to 295 residues: Elongation factor Ts (295 aa).

The involved in Mg(2+) ion dislocation from EF-Tu stretch occupies residues 79 to 82; the sequence is TDFV.

This sequence belongs to the EF-Ts family.

The protein resides in the cytoplasm. Its function is as follows. Associates with the EF-Tu.GDP complex and induces the exchange of GDP to GTP. It remains bound to the aminoacyl-tRNA.EF-Tu.GTP complex up to the GTP hydrolysis stage on the ribosome. This chain is Elongation factor Ts, found in Bacillus anthracis (strain A0248).